A 244-amino-acid chain; its full sequence is Rho-related GTP-binding protein RhoE (244 aa).

Position 30 to 37 (30 to 37 (GDSQCGRT)) interacts with GTP. The Effector region motif lies at 52-60 (YVPTVFENY). GTP contacts are provided by residues 77 to 81 (DTSGS) and 135 to 138 (CKSD). At cysteine 241 the chain carries Cysteine methyl ester. Cysteine 241 carries S-farnesyl cysteine lipidation. The propeptide at 242–244 (TVM) is removed in mature form.

Belongs to the small GTPase superfamily. Rho family. In terms of assembly, binds ROCK1. Interacts with UBXD5.

It is found in the cell membrane. Functionally, binds GTP but lacks intrinsic GTPase activity and is resistant to Rho-specific GTPase-activating proteins. The protein is Rho-related GTP-binding protein RhoE (RND3) of Sus scrofa (Pig).